The chain runs to 108 residues: Ribonuclease P protein component 4 (108 aa).

Positions 67, 70, 93, and 96 each coordinate Zn(2+).

This sequence belongs to the eukaryotic/archaeal RNase P protein component 4 family. In terms of assembly, consists of a catalytic RNA component and at least 4-5 protein subunits. Requires Zn(2+) as cofactor.

The protein resides in the cytoplasm. It catalyses the reaction Endonucleolytic cleavage of RNA, removing 5'-extranucleotides from tRNA precursor.. Functionally, part of ribonuclease P, a protein complex that generates mature tRNA molecules by cleaving their 5'-ends. This is Ribonuclease P protein component 4 from Methanococcoides burtonii (strain DSM 6242 / NBRC 107633 / OCM 468 / ACE-M).